A 330-amino-acid chain; its full sequence is Phenylalanine--tRNA ligase alpha subunit (330 aa).

Mg(2+) is bound at residue Glu257.

The protein belongs to the class-II aminoacyl-tRNA synthetase family. Phe-tRNA synthetase alpha subunit type 1 subfamily. As to quaternary structure, tetramer of two alpha and two beta subunits. Mg(2+) serves as cofactor.

Its subcellular location is the cytoplasm. The enzyme catalyses tRNA(Phe) + L-phenylalanine + ATP = L-phenylalanyl-tRNA(Phe) + AMP + diphosphate + H(+). This Acaryochloris marina (strain MBIC 11017) protein is Phenylalanine--tRNA ligase alpha subunit.